Reading from the N-terminus, the 451-residue chain is G-protein coupled receptor 61 (451 aa).

Positions 1–14 (MESSPIPQSSGNSS) are enriched in low complexity. Residues 1-31 (MESSPIPQSSGNSSTLGRVPQTPGPSTASGV) are disordered. At 1-44 (MESSPIPQSSGNSSTLGRVPQTPGPSTASGVPEVGLRDVASESV) the chain is on the extracellular side. N-linked (GlcNAc...) asparagine glycosylation is present at asparagine 12. Residues 45 to 67 (ALFFMLLLDLTAVAGNAAVMAVI) form a helical membrane-spanning segment. The Cytoplasmic portion of the chain corresponds to 68-75 (AKTPALRK). A helical membrane pass occupies residues 76–98 (FVFVFHLCLVDLLAALTLMPLAM). Residues 99-112 (LSSSALFDHALFGE) are Extracellular-facing. A helical membrane pass occupies residues 113-135 (VACRLYLFLSVCFVSLAILSVSA). Topologically, residues 136 to 155 (INVERYYYVVHPMRYEVRMT) are cytoplasmic. The chain crosses the membrane as a helical span at residues 156 to 178 (LGLVASVLVGVWVKALAMASVPV). Topologically, residues 179–206 (LGRVSWEEGAPSVPPGCSLQWSHSAYCQ) are extracellular. Residues 207-229 (LFVVVFAVLYFLLPLLLILVVYC) form a helical membrane-spanning segment. The Cytoplasmic portion of the chain corresponds to 230–287 (SMFRVARVAAMQHGPLPTWMETPRQRSESLSSRSTMVTSSGAPQTTPHRTFGGGKAAV). The chain crosses the membrane as a helical span at residues 288–310 (VLLAVGGQFLLCWLPYFSFHLYV). Residues 311 to 324 (ALSAQPISTGQVES) lie on the Extracellular side of the membrane. A helical membrane pass occupies residues 325–344 (VVTWIGYFCFTSNPFFYGCL). Over 345 to 451 (NRQIRGELSK…RPAASPRLES (107 aa)) the chain is Cytoplasmic.

The protein belongs to the G-protein coupled receptor 1 family. As to quaternary structure, forms heterodimer with MTNR1B. Interacts with ARRB1 and ARRB2 in a spontaneous and agonist-independent manner; leading to the internalization of GPR61 in the endosomal compartment. In terms of tissue distribution, expressed in brain; detected in frontal and temporal lobes, occipital pole, amygdala and hippocampus. Also expressed in testis and T cells, B cells, and monocyte. Low expression in many other tissues. Widely expressed in the hippocampus (at protein level).

It is found in the cell membrane. It localises to the endosome membrane. Orphan G-protein coupled receptor. Constitutively activates the G(s)-alpha/cAMP signaling pathway. Shows a reciprocal regulatory interaction with the melatonin receptor MTNR1B most likely through receptor heteromerization. May be involved in the regulation of food intake and body weight. The protein is G-protein coupled receptor 61 (GPR61) of Homo sapiens (Human).